Here is a 207-residue protein sequence, read N- to C-terminus: Small ribosomal subunit protein uS4 (207 aa).

The disordered stretch occupies residues 31 to 53 (KAKFDSKPGQHGRTSGARTSDFG). An S4 RNA-binding domain is found at 97-157 (SRLDNVVYRM…EKSKKQARIV (61 aa)).

It belongs to the universal ribosomal protein uS4 family. Part of the 30S ribosomal subunit. Contacts protein S5. The interaction surface between S4 and S5 is involved in control of translational fidelity.

Its function is as follows. One of the primary rRNA binding proteins, it binds directly to 16S rRNA where it nucleates assembly of the body of the 30S subunit. In terms of biological role, with S5 and S12 plays an important role in translational accuracy. This Paracidovorax citrulli (strain AAC00-1) (Acidovorax citrulli) protein is Small ribosomal subunit protein uS4.